A 485-amino-acid chain; its full sequence is Hexokinase-1 (485 aa).

One can recognise a Hexokinase domain in the interval 21 to 468 (KELMDEIHQL…SGAGAAVIAA (448 aa)). The tract at residues 75–209 (TGKESGNYLA…ELPIEIVALI (135 aa)) is hexokinase small subdomain. Residues 86 to 91 (DLGGTN) and Lys-111 each bind ATP. Residues Ser-158, 175-176 (TK), 210-211 (ND), and Asn-237 each bind substrate. The tract at residues 210 to 457 (NDTVGTLIAS…DPITIVPAED (248 aa)) is hexokinase large subdomain. Ser-245 is subject to Phosphoserine. Glu-269 lines the substrate pocket. Ser-272 is modified (phosphoserine). Glu-302 contacts substrate. ATP-binding positions include 307-308 (GY), 344-348 (TSYPA), and 419-423 (SVYNK).

This sequence belongs to the hexokinase family. As to quaternary structure, homodimer.

The catalysed reaction is a D-hexose + ATP = a D-hexose 6-phosphate + ADP + H(+). It carries out the reaction D-fructose + ATP = D-fructose 6-phosphate + ADP + H(+). It catalyses the reaction D-glucose + ATP = D-glucose 6-phosphate + ADP + H(+). The protein operates within carbohydrate metabolism; hexose metabolism. Its pathway is carbohydrate degradation; glycolysis; D-glyceraldehyde 3-phosphate and glycerone phosphate from D-glucose: step 1/4. Its activity is regulated as follows. Subject to allosteric control. Substrate inhibition by ATP. Its function is as follows. Catalyzes the phosphorylation of hexose, such as D-glucose and D-fructose, to hexose 6-phosphate (D-glucose 6-phosphate and D-fructose 6-phosphate, respectively). Mediates the initial step of glycolysis by catalyzing phosphorylation of D-glucose to D-glucose 6-phosphate. This is Hexokinase-1 (HXK1) from Saccharomyces cerevisiae (strain ATCC 204508 / S288c) (Baker's yeast).